The sequence spans 553 residues: Probable glucomannan 4-beta-mannosyltransferase 1 (553 aa).

The chain crosses the membrane as a helical span at residues 64–84 (LLPVFKGLVVMCLVLSIIVFF). Aspartate 163 is an active-site residue. Substrate-binding residues include aspartate 222 and aspartate 224. Aspartate 316 is an active-site residue. The next 4 membrane-spanning stretches (helical) occupy residues 395–415 (VAVH…SVFF), 431–451 (LISI…IFWV), 510–530 (EVMV…YGHT), and 531–551 (WLHF…FGFV).

The protein belongs to the glycosyltransferase 2 family. Plant cellulose synthase-like A subfamily.

Its subcellular location is the golgi apparatus membrane. The catalysed reaction is GDP-mannose + (glucomannan)n = GDP + (glucomannan)n+1.. Probable mannan synthase which consists of a 4-beta-mannosyltransferase activity on mannan using GDP-mannose. The beta-1,4-mannan product is the backbone for galactomannan synthesis by galactomannan galactosyltransferase. Galactomannan is a noncellulosic polysaccharides of plant cell wall. The chain is Probable glucomannan 4-beta-mannosyltransferase 1 from Arabidopsis thaliana (Mouse-ear cress).